Here is a 129-residue protein sequence, read N- to C-terminus: Small ribosomal subunit protein uS9 (129 aa).

The protein belongs to the universal ribosomal protein uS9 family.

The sequence is that of Small ribosomal subunit protein uS9 from Aliarcobacter butzleri (strain RM4018) (Arcobacter butzleri).